The primary structure comprises 63 residues: MSQATSMRKRHRFNSRMTRIVLLISFIFFFGRFIYSSVGAWQHHQSKKEAQQSTLSVESPVQR.

A helical membrane pass occupies residues 20-40 (IVLLISFIFFFGRFIYSSVGA).

The protein resides in the membrane. This is an uncharacterized protein from Escherichia coli O157:H7.